We begin with the raw amino-acid sequence, 270 residues long: Proteasome subunit alpha type-1 (270 aa).

Residues 239–270 (SMEAAEEAPAAEAESSSMQEEDKGTDAAPMDI) are disordered. Residues 245-256 (EAPAAEAESSSM) are compositionally biased toward low complexity.

The protein belongs to the peptidase T1A family. The 26S proteasome consists of a 20S proteasome core and two 19S regulatory subunits. The 20S proteasome core is composed of 28 subunits that are arranged in four stacked rings, resulting in a barrel-shaped structure. The two end rings are each formed by seven alpha subunits, and the two central rings are each formed by seven beta subunits. The catalytic chamber with the active sites is on the inside of the barrel.

It is found in the cytoplasm. The protein resides in the nucleus. In terms of biological role, the proteasome is a multicatalytic proteinase complex which is characterized by its ability to cleave peptides with Arg, Phe, Tyr, Leu, and Glu adjacent to the leaving group at neutral or slightly basic pH. The proteasome has an ATP-dependent proteolytic activity. This is Proteasome subunit alpha type-1 (PAF1) from Oryza sativa subsp. japonica (Rice).